Here is a 461-residue protein sequence, read N- to C-terminus: MLQLLLSVERPVTVLGAGLAGTEAAWQVARAGIPVTIVEMRPMRRSPAHHSSDFAELVCSNSFGALSSDRAAGLLQEEMRRLGSLVIETADAHAVPAGGALAVDRGRYSAALTEALDQHPLVTIERREQQALPGDDQITVLATGPLTSEPLAEDLRAFTGRSDCHFFDAASPIVHGDSIDLNVAFRASRYDKGDADYINCPMDKEQYLAFREALLTAEQAELKDFDKNDATFFEGCLPIEELARRGEDTMRYGPLKPIGLWDPRWGDVNDRDVRRAKRAYAVVQLRQEDKDGRLWNLVGFQTNLKWGEQKRVLQMIPGLAEAEFVRFGVMHRNTFLESPQLLEPTLQFRSRSSLLAAGQITGTEGYAAAVAGGWLAGTNAARLARGLAPIDLPATCMSGALTHFVSEAPTAKFQPMPPNFGLLPELPERIRDKRARYGAYRDRALRDLERIKALTPNALVA.

16-21 (GAGLAG) is a binding site for FAD.

The protein belongs to the MnmG family. TrmFO subfamily. The cofactor is FAD.

The protein localises to the cytoplasm. The catalysed reaction is uridine(54) in tRNA + (6R)-5,10-methylene-5,6,7,8-tetrahydrofolate + NADH + H(+) = 5-methyluridine(54) in tRNA + (6S)-5,6,7,8-tetrahydrofolate + NAD(+). The enzyme catalyses uridine(54) in tRNA + (6R)-5,10-methylene-5,6,7,8-tetrahydrofolate + NADPH + H(+) = 5-methyluridine(54) in tRNA + (6S)-5,6,7,8-tetrahydrofolate + NADP(+). Its function is as follows. Catalyzes the folate-dependent formation of 5-methyl-uridine at position 54 (M-5-U54) in all tRNAs. This is Methylenetetrahydrofolate--tRNA-(uracil-5-)-methyltransferase TrmFO from Parasynechococcus marenigrum (strain WH8102).